The primary structure comprises 1128 residues: Translation initiation factor IF-2 (1128 aa).

Positions 57–519 are disordered; it reads NSDKQILSIN…KETTRQRQKR (463 aa). The segment covering 70 to 83 has biased composition (basic and acidic residues); the sequence is NKKDNYKQNKEDKS. The span at 100–110 shows a compositional bias: low complexity; it reads KKQLLNKPLNK. A compositionally biased stretch (polar residues) spans 120 to 146; sequence QLKNPNKPNIYNSSQSQANLTNQNTKS. The segment covering 147–158 has biased composition (basic and acidic residues); the sequence is KPSEHFNKDKKT. The span at 182 to 196 shows a compositional bias: low complexity; the sequence is KNINNNLKSNESSKN. The segment covering 201-214 has biased composition (basic and acidic residues); the sequence is GDKRELSLKPDQNR. 2 stretches are compositionally biased toward polar residues: residues 243 to 267 and 386 to 397; these read KQNN…NRPG and AKTNNQKQNIES. Over residues 432–445 the composition is skewed to basic and acidic residues; it reads RKDWDDSAKLEALR. Over residues 499-519 the composition is skewed to basic residues; it reads HKSTKQFKKKKKETTRQRQKR. A tr-type G domain is found at 620–792; that stretch reads KRPPVITVMG…ILLVSEVEDL (173 aa). Residues 629–636 are G1; the sequence is GHVDHGKT. 629 to 636 contacts GTP; it reads GHVDHGKT. Residues 654-658 are G2; it reads GITQH. Residues 679 to 682 are G3; the sequence is DTPG. Residues 679-683 and 733-736 contribute to the GTP site; these read DTPGH and NKID. A G4 region spans residues 733-736; the sequence is NKID. The interval 769 to 771 is G5; the sequence is SAI.

The protein belongs to the TRAFAC class translation factor GTPase superfamily. Classic translation factor GTPase family. IF-2 subfamily.

Its subcellular location is the cytoplasm. Its function is as follows. One of the essential components for the initiation of protein synthesis. Protects formylmethionyl-tRNA from spontaneous hydrolysis and promotes its binding to the 30S ribosomal subunits. Also involved in the hydrolysis of GTP during the formation of the 70S ribosomal complex. In Prochlorococcus marinus (strain MIT 9312), this protein is Translation initiation factor IF-2.